Here is a 122-residue protein sequence, read N- to C-terminus: Large ribosomal subunit protein uL18 (122 aa).

Positions 1–20 are disordered; the sequence is MFKKVSKNANRLSRHQRVRN.

This sequence belongs to the universal ribosomal protein uL18 family. In terms of assembly, part of the 50S ribosomal subunit; part of the 5S rRNA/L5/L18/L25 subcomplex. Contacts the 5S and 23S rRNAs.

Functionally, this is one of the proteins that bind and probably mediate the attachment of the 5S RNA into the large ribosomal subunit, where it forms part of the central protuberance. The chain is Large ribosomal subunit protein uL18 from Alkaliphilus oremlandii (strain OhILAs) (Clostridium oremlandii (strain OhILAs)).